The following is a 130-amino-acid chain: Small ribosomal subunit protein uS9 (130 aa).

The protein belongs to the universal ribosomal protein uS9 family.

This Stenotrophomonas maltophilia (strain R551-3) protein is Small ribosomal subunit protein uS9.